Reading from the N-terminus, the 626-residue chain is Elongation factor 4 (626 aa).

The tr-type G domain maps to 14-195 (SVIRNFCIIA…QIVMDVPAPH (182 aa)). Residues 26–31 (DHGKST) and 142–145 (NKID) contribute to the GTP site. A disordered region spans residues 603 to 626 (LSTGEDSNDRDTKDKIRAAQKTEG). The segment covering 609 to 626 (SNDRDTKDKIRAAQKTEG) has biased composition (basic and acidic residues).

It belongs to the TRAFAC class translation factor GTPase superfamily. Classic translation factor GTPase family. LepA subfamily.

It is found in the cell membrane. It carries out the reaction GTP + H2O = GDP + phosphate + H(+). Required for accurate and efficient protein synthesis under certain stress conditions. May act as a fidelity factor of the translation reaction, by catalyzing a one-codon backward translocation of tRNAs on improperly translocated ribosomes. Back-translocation proceeds from a post-translocation (POST) complex to a pre-translocation (PRE) complex, thus giving elongation factor G a second chance to translocate the tRNAs correctly. Binds to ribosomes in a GTP-dependent manner. This is Elongation factor 4 from Bifidobacterium longum subsp. infantis (strain ATCC 15697 / DSM 20088 / JCM 1222 / NCTC 11817 / S12).